The following is a 226-amino-acid chain: 2-C-methyl-D-erythritol 4-phosphate cytidylyltransferase (226 aa).

The protein belongs to the IspD/TarI cytidylyltransferase family. IspD subfamily.

It carries out the reaction 2-C-methyl-D-erythritol 4-phosphate + CTP + H(+) = 4-CDP-2-C-methyl-D-erythritol + diphosphate. It participates in isoprenoid biosynthesis; isopentenyl diphosphate biosynthesis via DXP pathway; isopentenyl diphosphate from 1-deoxy-D-xylulose 5-phosphate: step 2/6. Its function is as follows. Catalyzes the formation of 4-diphosphocytidyl-2-C-methyl-D-erythritol from CTP and 2-C-methyl-D-erythritol 4-phosphate (MEP). The chain is 2-C-methyl-D-erythritol 4-phosphate cytidylyltransferase from Prochlorococcus marinus (strain MIT 9312).